Here is a 160-residue protein sequence, read N- to C-terminus: UPF0262 protein Oant_0325 (160 aa).

This sequence belongs to the UPF0262 family.

This is UPF0262 protein Oant_0325 from Brucella anthropi (strain ATCC 49188 / DSM 6882 / CCUG 24695 / JCM 21032 / LMG 3331 / NBRC 15819 / NCTC 12168 / Alc 37) (Ochrobactrum anthropi).